We begin with the raw amino-acid sequence, 264 residues long: MPARCVAAHCGNTTKSGKSLFRFPKDRAVRLLWDRFVRGCRADWYGGNDRSVICSDHFAPACFDVSSVIQKNLRFSQRLRLVAGAVPTLHRVPAPAPKGGEEGDQAGRPDTRGELQAARHSEAAPGPVSCTRPRAGKQAAASQYSVGTEEITCENEVVQTQPHADNPSNTVTSVPTHCEEGPVHKSTQISLKRPRHRSVGIQAKVKAFGKRLCNATTQTEELWSRTSSLFDIYSSDSEIDTDWDIKSEQSDLSYIAVQVKEETC.

Residues 1–90 form a THAP-type zinc finger; it reads MPARCVAAHC…LVAGAVPTLH (90 aa). 2 disordered regions span residues 90 to 136 and 160 to 195; these read HRVP…PRAG and TQPH…KRPR. The segment covering 99–122 has biased composition (basic and acidic residues); it reads GGEEGDQAGRPDTRGELQAARHSE. Positions 160–175 are enriched in polar residues; that stretch reads TQPHADNPSNTVTSVP.

The polypeptide is THAP domain-containing protein 10 (THAP10) (Pongo abelii (Sumatran orangutan)).